Here is a 3763-residue protein sequence, read N- to C-terminus: Colossin-B (3763 aa).

The N-terminal stretch at 1 to 19 (MKGSIFLLFIFQIFKFSSS) is a signal peptide. 4 N-linked (GlcNAc...) asparagine glycosylation sites follow: Asn-43, Asn-110, Asn-258, and Asn-284. A Follistatin-like 1 domain is found at 619-643 (DCSTLQCPSGYECKLDKNSKTRGCI). Residues Asn-652 and Asn-672 are each glycosylated (N-linked (GlcNAc...) asparagine). 2 consecutive Follistatin-like domains span residues 701–724 (HCRNVDCPKSHYCKIQRNGLPRCF) and 729–752 (PCEFVSCDCNLECRVTSCGDAKCF). The interval 792 to 832 (PPIFYETPSPTSAPPTETPSPTDTPTDKPTIPPTPTPTPSK) is disordered. Positions 810–820 (PSPTDTPTDKP) are enriched in low complexity. Residues Asn-845 and Asn-991 are each glycosylated (N-linked (GlcNAc...) asparagine). 2 disordered regions span residues 1033-1068 (LGSSGSGSSGNSGSSGSGGSSNDSTESQWSSESESS) and 1095-1124 (PQPTPSTDIPTTTTTTTSTSTTGPIEPTST). Residues 1036 to 1051 (SGSGSSGNSGSSGSGG) show a composition bias toward gly residues. Composition is skewed to low complexity over residues 1052-1068 (SSNDSTESQWSSESESS) and 1099-1124 (PSTDIPTTTTTTTSTSTTGPIEPTST). A glycan (N-linked (GlcNAc...) asparagine) is linked at Asn-1054. The CNA-B 1 domain occupies 1159-1227 (VSGVEITLIQ…LLNKYPIDTS (69 aa)). Asn-1229 and Asn-1247 each carry an N-linked (GlcNAc...) asparagine glycan. Residues 1304 to 1373 (IKGIQVTLKD…VYTMDTFQLS (70 aa)) form the CNA-B 2 domain. Asn-1381 carries an N-linked (GlcNAc...) asparagine glycan. CNA-B domains lie at 1437-1515 (LPGV…IDTK), 1582-1648 (VPGI…LTLD), and 1731-1809 (VGGV…FTLS). Asn-1769 and Asn-1815 each carry an N-linked (GlcNAc...) asparagine glycan. The disordered stretch occupies residues 1883–1955 (GSTVDGGTSV…SEQPPEDSME (73 aa)). The segment covering 1898–1948 (STSTTTVSSSPSSSSDIGSSSDISSEVSSSLSSSPSSSEQPSEQSSSSSEQ) has biased composition (low complexity). The region spanning 2015-2083 (VPDVTVTLVN…DPLSGKIDFN (69 aa)) is the CNA-B 6 domain. Residues Asn-2128, Asn-2145, Asn-2243, Asn-2294, Asn-2351, Asn-2378, Asn-2453, Asn-2493, Asn-2496, Asn-2516, Asn-2572, Asn-2601, Asn-2624, Asn-2668, Asn-2698, Asn-2714, Asn-2781, Asn-2787, Asn-2800, Asn-2838, and Asn-2858 are each glycosylated (N-linked (GlcNAc...) asparagine). A CNA-B 7 domain is found at 2143 to 2197 (FPNITVRLFDQNLQPVLDNFNIQVEPTVTNALGQYYFDNLHSGSYIVKFEVPTRY). Positions 2292-2345 (VPNVTVEIFNPTGQQVYNINELLIGSTTTDSNGYYLFDEIQPGSYIIKFSNIPN) constitute a CNA-B 8 domain. Positions 2453–2477 (NTTTTDQNGLYYFDNLSPGLYKLLF) constitute a CNA-B 9 domain. Positions 2713 to 2766 (VNGTIVTLLDINGNTMVDADSYPINSYTTGPDGYYKFDDFSFGKYIITFSGVPD) constitute a CNA-B 10 domain. Residues 2984–3061 (LGGVVVTLYN…DSNASPVDGY (78 aa)) form the CNA-B 11 domain. N-linked (GlcNAc...) asparagine glycosylation is found at Asn-3083, Asn-3130, Asn-3372, Asn-3390, Asn-3459, Asn-3466, Asn-3557, Asn-3666, Asn-3676, and Asn-3681. In terms of domain architecture, CNA-B 12 spans 3128–3201 (YPNITVSIYT…TKTGVNLGII (74 aa)). The 70-residue stretch at 3664 to 3733 (MANITVQLFS…NDKRDLEKIN (70 aa)) folds into the CNA-B 13 domain.

This sequence belongs to the serine-aspartate repeat-containing protein (SDr) family.

It is found in the secreted. The chain is Colossin-B (colB) from Dictyostelium discoideum (Social amoeba).